The following is a 167-amino-acid chain: UPF0225 protein VV1_2912 (167 aa).

The protein belongs to the UPF0225 family.

The protein is UPF0225 protein VV1_2912 of Vibrio vulnificus (strain CMCP6).